We begin with the raw amino-acid sequence, 96 residues long: Small ribosomal subunit protein bS6 (96 aa).

This sequence belongs to the bacterial ribosomal protein bS6 family.

Its function is as follows. Binds together with bS18 to 16S ribosomal RNA. This Salinispora arenicola (strain CNS-205) protein is Small ribosomal subunit protein bS6.